The sequence spans 120 residues: MVVNIYDTANELERQMRQTQEFIGLKEAFDDLKADKEATDLFVKFQAKQAAAQQKQMQGQEISEDEIKEIQALAKDVTSKDVIQALMAKEQQVDQMIQQLNQIITGPLQELYKQFGPQEG.

This sequence belongs to the UPF0342 family.

This is UPF0342 protein LAF_1331 from Limosilactobacillus fermentum (strain NBRC 3956 / LMG 18251) (Lactobacillus fermentum).